The following is a 1148-amino-acid chain: Ice nucleation protein (1148 aa).

Disordered stretches follow at residues 110–131 (ADPA…PTAI), 222–256 (YGST…GYGS), and 367–394 (GSTQ…GSNL). Residues 114 to 128 (STSTSTSTSTLTPMP) show a composition bias toward low complexity. The tract at residues 180–1099 (ATYGSTLSGD…LSAGEDSTLI (920 aa)) is octapeptide periodicity. A compositionally biased stretch (polar residues) spans 230-250 (EDSSLTAGYGSTQTAQEGSNL).

Belongs to the bacterial ice nucleation protein family.

Its subcellular location is the cell outer membrane. Its function is as follows. Ice nucleation proteins enable bacteria to nucleate crystallization in supercooled water. The protein is Ice nucleation protein (inaK) of Pseudomonas syringae.